The chain runs to 175 residues: ATP synthase subunit b 1 (175 aa).

Residues 26–48 (IINLAIIIGVLYVYGSKFIGNIL) traverse the membrane as a helical segment.

The protein belongs to the ATPase B chain family. In terms of assembly, F-type ATPases have 2 components, F(1) - the catalytic core - and F(0) - the membrane proton channel. F(1) has five subunits: alpha(3), beta(3), gamma(1), delta(1), epsilon(1). F(0) has four main subunits: a(1), b(1), b'(1) and c(10-14). The alpha and beta chains form an alternating ring which encloses part of the gamma chain. F(1) is attached to F(0) by a central stalk formed by the gamma and epsilon chains, while a peripheral stalk is formed by the delta, b and b' chains.

The protein localises to the cellular thylakoid membrane. Functionally, f(1)F(0) ATP synthase produces ATP from ADP in the presence of a proton or sodium gradient. F-type ATPases consist of two structural domains, F(1) containing the extramembraneous catalytic core and F(0) containing the membrane proton channel, linked together by a central stalk and a peripheral stalk. During catalysis, ATP synthesis in the catalytic domain of F(1) is coupled via a rotary mechanism of the central stalk subunits to proton translocation. Component of the F(0) channel, it forms part of the peripheral stalk, linking F(1) to F(0). The protein is ATP synthase subunit b 1 of Picosynechococcus sp. (strain ATCC 27264 / PCC 7002 / PR-6) (Agmenellum quadruplicatum).